The sequence spans 374 residues: UDP-N-acetylglucosamine--N-acetylmuramyl-(pentapeptide) pyrophosphoryl-undecaprenol N-acetylglucosamine transferase (374 aa).

Residues 10 to 12, Asn124, Arg166, Ser196, and Gln294 each bind UDP-N-acetyl-alpha-D-glucosamine; that span reads TGG.

The protein belongs to the glycosyltransferase 28 family. MurG subfamily.

It localises to the cell membrane. It carries out the reaction di-trans,octa-cis-undecaprenyl diphospho-N-acetyl-alpha-D-muramoyl-L-alanyl-D-glutamyl-meso-2,6-diaminopimeloyl-D-alanyl-D-alanine + UDP-N-acetyl-alpha-D-glucosamine = di-trans,octa-cis-undecaprenyl diphospho-[N-acetyl-alpha-D-glucosaminyl-(1-&gt;4)]-N-acetyl-alpha-D-muramoyl-L-alanyl-D-glutamyl-meso-2,6-diaminopimeloyl-D-alanyl-D-alanine + UDP + H(+). It participates in cell wall biogenesis; peptidoglycan biosynthesis. Its function is as follows. Cell wall formation. Catalyzes the transfer of a GlcNAc subunit on undecaprenyl-pyrophosphoryl-MurNAc-pentapeptide (lipid intermediate I) to form undecaprenyl-pyrophosphoryl-MurNAc-(pentapeptide)GlcNAc (lipid intermediate II). This Symbiobacterium thermophilum (strain DSM 24528 / JCM 14929 / IAM 14863 / T) protein is UDP-N-acetylglucosamine--N-acetylmuramyl-(pentapeptide) pyrophosphoryl-undecaprenol N-acetylglucosamine transferase.